Reading from the N-terminus, the 382-residue chain is Acetylserotonin O-methyltransferase (382 aa).

S-adenosyl-L-homocysteine contacts are provided by glycine 218, aspartate 241, aspartate 261, methionine 262, and lysine 275. The Proton acceptor role is filled by histidine 279. Residues glutamate 308 and glutamate 347 contribute to the active site.

It belongs to the class I-like SAM-binding methyltransferase superfamily. Cation-independent O-methyltransferase family.

It is found in the cytoplasm. It catalyses the reaction N-acetylserotonin + S-adenosyl-L-methionine = melatonin + S-adenosyl-L-homocysteine + H(+). The protein operates within aromatic compound metabolism; melatonin biosynthesis; melatonin from serotonin: step 1/2. Functionally, methyltransferase which catalyzes the transfer of a methyl group onto N-acetylserotonin, producing melatonin (N-acetyl-5-methoxytryptamine). Does not seem to possess caffeate O-methyltransferase activity. Implicated in melatonin-dependent circadian dynamics of stomatal aperture to minimize night water loss and promote drought tolerance. Prevents seed germination by promoting melatonin biosynthesis. Promotes melatonin-triggered defense responses to the necrotrophic fungus Botrytis cinerea. Its function is as follows. (Microbial infection) Promotes melatonin-triggered defense responses to the necrotrophic fungus Botrytis cinerea. In Arabidopsis thaliana (Mouse-ear cress), this protein is Acetylserotonin O-methyltransferase.